Reading from the N-terminus, the 395-residue chain is Phosphoglycerate kinase (395 aa).

Residues 21–23, Arg36, 59–62, Arg120, and Arg153 each bind substrate; these read DFN and HLGR. ATP is bound by residues Lys203, Glu325, and 351–354; that span reads GGDS.

It belongs to the phosphoglycerate kinase family. In terms of assembly, monomer.

It localises to the cytoplasm. The catalysed reaction is (2R)-3-phosphoglycerate + ATP = (2R)-3-phospho-glyceroyl phosphate + ADP. Its pathway is carbohydrate degradation; glycolysis; pyruvate from D-glyceraldehyde 3-phosphate: step 2/5. The protein is Phosphoglycerate kinase of Roseiflexus sp. (strain RS-1).